Reading from the N-terminus, the 743-residue chain is Phosphoribosylformylglycinamidine synthase subunit PurL (743 aa).

Residue His-50 is part of the active site. ATP is bound by residues Tyr-53 and Lys-92. Mg(2+) is bound at residue Glu-94. Residues 95–98 (SHNH) and Arg-117 contribute to the substrate site. Catalysis depends on His-96, which acts as the Proton acceptor. Asp-118 is a binding site for Mg(2+). Gln-241 is a binding site for substrate. Mg(2+) is bound at residue Asp-269. Residue 313–315 (ESQ) participates in substrate binding. ATP-binding residues include Asp-494 and Gly-531. Asn-532 provides a ligand contact to Mg(2+). Residue Ser-534 participates in substrate binding.

Belongs to the FGAMS family. In terms of assembly, monomer. Part of the FGAM synthase complex composed of 1 PurL, 1 PurQ and 2 PurS subunits.

Its subcellular location is the cytoplasm. It catalyses the reaction N(2)-formyl-N(1)-(5-phospho-beta-D-ribosyl)glycinamide + L-glutamine + ATP + H2O = 2-formamido-N(1)-(5-O-phospho-beta-D-ribosyl)acetamidine + L-glutamate + ADP + phosphate + H(+). It functions in the pathway purine metabolism; IMP biosynthesis via de novo pathway; 5-amino-1-(5-phospho-D-ribosyl)imidazole from N(2)-formyl-N(1)-(5-phospho-D-ribosyl)glycinamide: step 1/2. Functionally, part of the phosphoribosylformylglycinamidine synthase complex involved in the purines biosynthetic pathway. Catalyzes the ATP-dependent conversion of formylglycinamide ribonucleotide (FGAR) and glutamine to yield formylglycinamidine ribonucleotide (FGAM) and glutamate. The FGAM synthase complex is composed of three subunits. PurQ produces an ammonia molecule by converting glutamine to glutamate. PurL transfers the ammonia molecule to FGAR to form FGAM in an ATP-dependent manner. PurS interacts with PurQ and PurL and is thought to assist in the transfer of the ammonia molecule from PurQ to PurL. The polypeptide is Phosphoribosylformylglycinamidine synthase subunit PurL (Sinorhizobium fredii (strain HH103)).